The following is a 519-amino-acid chain: 2-isopropylmalate synthase (519 aa).

The region spanning 12-274 (IRIFDTTLRD…DTSIHTSRIV (263 aa)) is the Pyruvate carboxyltransferase domain. Mn(2+)-binding residues include aspartate 21, histidine 209, histidine 211, and asparagine 245. A regulatory domain region spans residues 396–519 (RLASMTISDV…MQNKQNTALA (124 aa)).

Belongs to the alpha-IPM synthase/homocitrate synthase family. LeuA type 1 subfamily. As to quaternary structure, homodimer. The cofactor is Mn(2+).

The protein localises to the cytoplasm. The enzyme catalyses 3-methyl-2-oxobutanoate + acetyl-CoA + H2O = (2S)-2-isopropylmalate + CoA + H(+). The protein operates within amino-acid biosynthesis; L-leucine biosynthesis; L-leucine from 3-methyl-2-oxobutanoate: step 1/4. In terms of biological role, catalyzes the condensation of the acetyl group of acetyl-CoA with 3-methyl-2-oxobutanoate (2-ketoisovalerate) to form 3-carboxy-3-hydroxy-4-methylpentanoate (2-isopropylmalate). The protein is 2-isopropylmalate synthase of Xylella fastidiosa (strain M23).